Here is a 155-residue protein sequence, read N- to C-terminus: Ribosomal RNA large subunit methyltransferase H (155 aa).

S-adenosyl-L-methionine-binding positions include Leu73, Gly104, and 123–128 (LSPLTL).

The protein belongs to the RNA methyltransferase RlmH family. Homodimer.

The protein localises to the cytoplasm. The enzyme catalyses pseudouridine(1915) in 23S rRNA + S-adenosyl-L-methionine = N(3)-methylpseudouridine(1915) in 23S rRNA + S-adenosyl-L-homocysteine + H(+). Its function is as follows. Specifically methylates the pseudouridine at position 1915 (m3Psi1915) in 23S rRNA. This is Ribosomal RNA large subunit methyltransferase H from Pseudomonas syringae pv. tomato (strain ATCC BAA-871 / DC3000).